A 197-amino-acid chain; its full sequence is Probable NADPH:quinone oxidoreductase 1 (197 aa).

The protein belongs to the SsuE family. In terms of assembly, homotetramer. Requires FMN as cofactor.

It carries out the reaction a quinone + NADH + H(+) = a quinol + NAD(+). It catalyses the reaction a quinone + NADPH + H(+) = a quinol + NADP(+). The enzyme apparently serves as a quinone reductase in connection with conjugation reactions of hydroquinones involved in detoxification pathways. In Oryza sativa subsp. japonica (Rice), this protein is Probable NADPH:quinone oxidoreductase 1.